Here is a 268-residue protein sequence, read N- to C-terminus: MNSNYLLLPHFDPSIFTLGDSNIGLRWYGLMYLLGFVFARWLAVRRANRPNSGWTVDQVDSLLFNGFMGVFIGGRVGDVFFYNLDHFLQEPLYLFRVWEGGMSFHGGLIGVIVAMIWTSYSQKRNFWQTADFVAPLIPFGLGLGRIGNFINLELWGRETNVPWAMIFPNDPLLLPRHPSQLYEAFLEGLVLFAILNIFIKKPRPMASVAGLFLIGYGVFRFIVEYVREPEVENFFGIITRGQALCLPMIIGGAFIMAWAYSRKSAVIK.

Transmembrane regions (helical) follow at residues 23 to 43 (IGLR…RWLA), 62 to 82 (LLFN…VFFY), 97 to 117 (VWEG…AMIW), 132 to 152 (FVAP…FINL), 179 to 199 (SQLY…NIFI), 206 to 226 (ASVA…VEYV), and 241 to 261 (GQAL…WAYS). Residue Arg-145 participates in a 1,2-diacyl-sn-glycero-3-phospho-(1'-sn-glycerol) binding.

This sequence belongs to the Lgt family.

It is found in the cell inner membrane. It catalyses the reaction L-cysteinyl-[prolipoprotein] + a 1,2-diacyl-sn-glycero-3-phospho-(1'-sn-glycerol) = an S-1,2-diacyl-sn-glyceryl-L-cysteinyl-[prolipoprotein] + sn-glycerol 1-phosphate + H(+). Its pathway is protein modification; lipoprotein biosynthesis (diacylglyceryl transfer). Catalyzes the transfer of the diacylglyceryl group from phosphatidylglycerol to the sulfhydryl group of the N-terminal cysteine of a prolipoprotein, the first step in the formation of mature lipoproteins. This is Phosphatidylglycerol--prolipoprotein diacylglyceryl transferase from Haemophilus influenzae (strain PittEE).